Here is a 291-residue protein sequence, read N- to C-terminus: Glycine--tRNA ligase alpha subunit (291 aa).

Belongs to the class-II aminoacyl-tRNA synthetase family. As to quaternary structure, tetramer of two alpha and two beta subunits.

The protein localises to the cytoplasm. The catalysed reaction is tRNA(Gly) + glycine + ATP = glycyl-tRNA(Gly) + AMP + diphosphate. The polypeptide is Glycine--tRNA ligase alpha subunit (Coprothermobacter proteolyticus (strain ATCC 35245 / DSM 5265 / OCM 4 / BT)).